Here is a 363-residue protein sequence, read N- to C-terminus: tRNA(Met) cytidine acetate ligase (363 aa).

Residues 7–20, Gly96, Asn152, and Arg175 contribute to the ATP site; that span reads IAEF…HKYL.

The protein belongs to the TmcAL family.

Its subcellular location is the cytoplasm. The enzyme catalyses cytidine(34) in elongator tRNA(Met) + acetate + ATP = N(4)-acetylcytidine(34) in elongator tRNA(Met) + AMP + diphosphate. Functionally, catalyzes the formation of N(4)-acetylcytidine (ac(4)C) at the wobble position of elongator tRNA(Met), using acetate and ATP as substrates. First activates an acetate ion to form acetyladenylate (Ac-AMP) and then transfers the acetyl group to tRNA to form ac(4)C34. The protein is tRNA(Met) cytidine acetate ligase of Streptococcus thermophilus (strain ATCC BAA-250 / LMG 18311).